Here is a 102-residue protein sequence, read N- to C-terminus: Small ribosomal subunit protein eS24 (102 aa).

Belongs to the eukaryotic ribosomal protein eS24 family.

The chain is Small ribosomal subunit protein eS24 from Methanococcus aeolicus (strain ATCC BAA-1280 / DSM 17508 / OCM 812 / Nankai-3).